The primary structure comprises 332 residues: DNA-directed RNA polymerase subunit alpha (332 aa).

The alpha N-terminal domain (alpha-NTD) stretch occupies residues 1–234 (MTVTISQVLR…DQLSVFGDFT (234 aa)). Residues 248–332 (VDPVLLRPID…PGVSQYGMLG (85 aa)) form an alpha C-terminal domain (alpha-CTD) region.

This sequence belongs to the RNA polymerase alpha chain family. As to quaternary structure, homodimer. The RNAP catalytic core consists of 2 alpha, 1 beta, 1 beta' and 1 omega subunit. When a sigma factor is associated with the core the holoenzyme is formed, which can initiate transcription.

It catalyses the reaction RNA(n) + a ribonucleoside 5'-triphosphate = RNA(n+1) + diphosphate. DNA-dependent RNA polymerase catalyzes the transcription of DNA into RNA using the four ribonucleoside triphosphates as substrates. The sequence is that of DNA-directed RNA polymerase subunit alpha from Xylella fastidiosa (strain M12).